The primary structure comprises 633 residues: DNA mismatch repair protein MutL (633 aa).

Positions Ala-338–Pro-407 are disordered. The segment covering Pro-366–Ala-391 has biased composition (low complexity).

Belongs to the DNA mismatch repair MutL/HexB family.

Its function is as follows. This protein is involved in the repair of mismatches in DNA. It is required for dam-dependent methyl-directed DNA mismatch repair. May act as a 'molecular matchmaker', a protein that promotes the formation of a stable complex between two or more DNA-binding proteins in an ATP-dependent manner without itself being part of a final effector complex. This chain is DNA mismatch repair protein MutL, found in Akkermansia muciniphila (strain ATCC BAA-835 / DSM 22959 / JCM 33894 / BCRC 81048 / CCUG 64013 / CIP 107961 / Muc).